A 329-amino-acid chain; its full sequence is MTTSDLVAGELAGDGLRDTRPGDTWLADRSWNRPGWTVAELEAAKAGRTISVVLPALDEEDTIGSVIDSISPLVDGLVDELIVLDSGSTDDTEIRAVAAGARVVSREQALPEVPIRPGKGEALWRSLAASRGDIVVFVDSDLINPHPMFVPWLVGPLLTGDGVHLVKSFYRRPLNVGDAGGGAGATGGGRVTELVARPLLAALRPELGCILQPLGGEYAATRELLTSVPFAPGYGVEIGLLVDTFDRLGLDAIAQVNLGVREHRNRPLAELGAMSRQVIATLLSRCGIPDSGVGLTQFVADGPEGQSYTQHTWPVSLADRPPMQAIRPR.

Residues 55–59, Ser86, Lys119, and 139–141 each bind UDP-alpha-D-glucose; these read PALDE and DSD. Asp141 contributes to the Mn(2+) binding site. 189–192 serves as a coordination point for (2R)-3-phosphoglycerate; the sequence is GRVT. 234-237 is a UDP-alpha-D-glucose binding site; the sequence is YGVE. His263 is a binding site for Mn(2+). Asn265 is a binding site for (2R)-3-phosphoglycerate.

Belongs to the glycosyltransferase 2 family. As to quaternary structure, homodimer. Requires Mg(2+) as cofactor. Mn(2+) is required as a cofactor.

It carries out the reaction an NDP-alpha-D-glucose + (2R)-3-phosphoglycerate = (2R)-2-O-(alpha-D-glucopyranosyl)-3-phospho-glycerate + a ribonucleoside 5'-diphosphate + H(+). It catalyses the reaction (2R)-3-phosphoglycerate + UDP-alpha-D-glucose = (2R)-2-O-(alpha-D-glucopyranosyl)-3-phospho-glycerate + UDP + H(+). The enzyme catalyses GDP-D-glucose + (2R)-3-phosphoglycerate = (2R)-2-O-(alpha-D-glucopyranosyl)-3-phospho-glycerate + GDP + H(+). Functionally, involved in the biosynthesis of 6-O-methylglucose lipopolysaccarides (MGLPs). Catalyzes the transfer of the glucose moiety from UDP-alpha-D-glucose (UDP-Glc) to the position 2 of 3-phospho-D-glycerate (3-PGA) to form glucosyl-3-phosphoglycerate (GPG). To a lesser extent can also use GDP-Glc but not UDP-Gal or UDP-GlcNAc as the sugar donor. The chain is Glucosyl-3-phosphoglycerate synthase from Mycolicibacterium paratuberculosis (strain ATCC BAA-968 / K-10) (Mycobacterium paratuberculosis).